The primary structure comprises 322 residues: MEQVPIKEMRLSDLRPNNKSIDTDLGGTKLVVIGKPGSGKSTLIKALLDSKRHIIPCAVVISGSEEANGFYKGVVPDLFIYHQFSPSIIDRIHRRQVKAKAEMGSKKSWLLVVIDDCMDNAKMFNDKEVRALFKNGRHWNVLVVIANQYVMDLTPDLRSSVDGVFLFRENNVTYRDKTYANFASVVPKKLYPTVMETVCQNYRCMFIDNTKATDNWHDSVFWYKAPYSKSAVAPFGARSYWKYACSKTGEEMPAVFDNVKILGDLLLKELPEAGEALVTYGGKDGPSDNEDGPSDDEDGPSDDEEGLSKDGVSEYYQSDLDD.

A disordered region spans residues leucine 277 to aspartate 322. A compositionally biased stretch (acidic residues) spans serine 287–glutamate 305.

This is an uncharacterized protein from Frog virus 3 (isolate Goorha) (FV-3).